The sequence spans 258 residues: UPF0246 protein VS_0505 (258 aa).

Belongs to the UPF0246 family.

The protein is UPF0246 protein VS_0505 of Vibrio atlanticus (strain LGP32) (Vibrio splendidus (strain Mel32)).